We begin with the raw amino-acid sequence, 87 residues long: Sec-independent protein translocase protein TatA (87 aa).

The chain crosses the membrane as a helical span at residues 1–21; sequence MGGMSITHWIVVAVVVMIFFG. Residues 40 to 87 form a disordered region; the sequence is KKGMSEDDTTPPAAPPAPAPRLENQPLPPENTTQNVAQNVPNDIKNNQ. The span at 69 to 87 shows a compositional bias: polar residues; that stretch reads ENTTQNVAQNVPNDIKNNQ.

This sequence belongs to the TatA/E family. The Tat system comprises two distinct complexes: a TatABC complex, containing multiple copies of TatA, TatB and TatC subunits, and a separate TatA complex, containing only TatA subunits. Substrates initially bind to the TatABC complex, which probably triggers association of the separate TatA complex to form the active translocon.

It localises to the cell inner membrane. In terms of biological role, part of the twin-arginine translocation (Tat) system that transports large folded proteins containing a characteristic twin-arginine motif in their signal peptide across membranes. TatA could form the protein-conducting channel of the Tat system. This is Sec-independent protein translocase protein TatA from Zymomonas mobilis subsp. mobilis (strain ATCC 31821 / ZM4 / CP4).